Reading from the N-terminus, the 407-residue chain is Cation efflux system protein CusB (407 aa).

Residues 1-28 (MKKIALIIGSMIAGGIISAAGFTWFAKA) form the signal peptide.

It belongs to the membrane fusion protein (MFP) (TC 8.A.1) family. As to quaternary structure, the cus efflux system is composed of CusA, CusB, CusC and CusF.

Its function is as follows. Part of a cation efflux system that mediates resistance to copper and silver. The protein is Cation efflux system protein CusB (cusB) of Escherichia coli O157:H7.